Reading from the N-terminus, the 102-residue chain is uncharacterized protein (102 aa).

The segment at 77-102 (RKDGDEKSKPNSKDYASRPIRDHSKI) is disordered.

This is an uncharacterized protein from Microplitis demolitor (Parasitoid wasp).